We begin with the raw amino-acid sequence, 230 residues long: Cutinase 1 (230 aa).

An N-terminal signal peptide occupies residues 1 to 16; that stretch reads MKFFALTTLLAATASA. A propeptide spanning residues 17–31 is cleaved from the precursor; that stretch reads LPTSNPAQELEARQL. G32 bears the N-D-glucuronoyl glycine mark. C47 and C125 are joined by a disulfide. S136 serves as the catalytic Nucleophile. C187 and C194 are disulfide-bonded. D191 is an active-site residue. Catalysis depends on H204, which acts as the Proton donor/acceptor.

Belongs to the cutinase family. Post-translationally, the 2 disulfide bonds play a critical role in holding the catalytic residues in juxta-position; reduction of the disulfide bridges results in the complete inactivation of the enzyme. O-glycosylated; contains one mole each of mannose, arabinose, N-acetylglucosamine, and glucuronic acid.

It is found in the secreted. The enzyme catalyses cutin + H2O = cutin monomers.. Inhibited by n-undecyl phosphonate (C11Y4). Inhibited by paraoxon. Its function is as follows. Catalyzes the hydrolysis of complex carboxylic polyesters found in the cell wall of plants. Degrades cutin, a macromolecule that forms the structure of the plant cuticle. Allows pathogenic fungi to penetrate through the cuticular barrier into the host plant during the initial stage of fungal infection. This chain is Cutinase 1 (CUT1), found in Fusarium vanettenii (Neocosmospora pisi).